We begin with the raw amino-acid sequence, 60 residues long: Large ribosomal subunit protein uL30 (60 aa).

It belongs to the universal ribosomal protein uL30 family. As to quaternary structure, part of the 50S ribosomal subunit.

This chain is Large ribosomal subunit protein uL30, found in Baumannia cicadellinicola subsp. Homalodisca coagulata.